The primary structure comprises 192 residues: Mitochondrial import inner membrane translocase subunit TIM18 (192 aa).

The transit peptide at Met-1 to Leu-42 directs the protein to the mitochondrion. Topologically, residues Asn-43–Thr-88 are mitochondrial matrix. Residues Leu-89–Leu-109 form a helical membrane-spanning segment. Residues Leu-110–Ser-113 lie on the Mitochondrial intermembrane side of the membrane. A helical membrane pass occupies residues Leu-114–Ile-134. Over Pro-135–Lys-144 the chain is Mitochondrial matrix. A helical membrane pass occupies residues Leu-145 to Glu-165. Over Thr-166–Asn-192 the chain is Mitochondrial intermembrane.

The protein belongs to the CybS family. Component of the TIM22 complex, whose core is composed of TIM18, TIM22 and TIM54, associated with the peripheral proteins MRS5/TIM12 and the 70 kDa heterohexamer composed of TIM9 and TIM10 (or TIM8 and TIM13).

It is found in the mitochondrion inner membrane. Its function is as follows. Component of the TIM22 complex, a complex that mediates the import and insertion of multi-pass transmembrane proteins into the mitochondrial inner membrane. The TIM22 complex forms a twin-pore translocase that uses the membrane potential as external driving force. Its role in the complex is unclear but it may be involved in the assembly and stabilization of the TIM22 complex. This is Mitochondrial import inner membrane translocase subunit TIM18 (TIM18) from Saccharomyces cerevisiae (strain ATCC 204508 / S288c) (Baker's yeast).